We begin with the raw amino-acid sequence, 210 residues long: Probable GTP-binding protein EngB (210 aa).

The region spanning 25-199 (RGIEVAFAGR…RQKLDSWFSE (175 aa)) is the EngB-type G domain. GTP-binding positions include 33-40 (GRSNAGKS), 60-64 (GRTQL), 78-81 (DLPG), 145-148 (TKAD), and 178-180 (FSS). Residues serine 40 and threonine 62 each coordinate Mg(2+).

The protein belongs to the TRAFAC class TrmE-Era-EngA-EngB-Septin-like GTPase superfamily. EngB GTPase family. The cofactor is Mg(2+).

Its function is as follows. Necessary for normal cell division and for the maintenance of normal septation. The polypeptide is Probable GTP-binding protein EngB (Salmonella paratyphi B (strain ATCC BAA-1250 / SPB7)).